The sequence spans 162 residues: Proepiregulin (162 aa).

The signal sequence occupies residues 1 to 22; it reads METLPASWVLTLLCLGSHLLQA. The propeptide occupies 23–55; it reads VISTTVIPSCIPGESEDNCTALVQMEDDPRVAQ. Asn40 is a glycosylation site (N-linked (GlcNAc...) asparagine). At 53-112 the chain is on the extracellular side; sequence VAQVQITKCSSDMDGYCLHGQCIYLVDMREKFCRCEVGYTGLRCEHFFLTVHQPLSKEYV. The 41-residue stretch at 57 to 97 folds into the EGF-like domain; sequence QITKCSSDMDGYCLHGQCIYLVDMREKFCRCEVGYTGLRCE. 3 cysteine pairs are disulfide-bonded: Cys61-Cys74, Cys69-Cys85, and Cys87-Cys96. The propeptide at 102 to 162 is removed in mature form; that stretch reads TVHQPLSKEY…TSGDPVLPQV (61 aa). Residues 113 to 133 form a helical membrane-spanning segment; that stretch reads ALTVILIFLFLIITAGCIYYF. Residues 134 to 162 are Cytoplasmic-facing; it reads CRWYKNRKSKKSREEYERVTSGDPVLPQV.

As to quaternary structure, interacts with EGFR and ERBB4.

It is found in the secreted. The protein localises to the extracellular space. The protein resides in the cell membrane. Its function is as follows. Ligand of the EGF receptor/EGFR and ERBB4. Stimulates EGFR and ERBB4 tyrosine phosphorylation. Contributes to inflammation, wound healing, tissue repair, and oocyte maturation by regulating angiogenesis and vascular remodeling and by stimulating cell proliferation. The chain is Proepiregulin (Ereg) from Mus musculus (Mouse).